We begin with the raw amino-acid sequence, 68 residues long: Elastase inhibitor AFLEI (68 aa).

C5 and C67 form a disulfide bridge.

The protein localises to the secreted. In terms of biological role, elastase inhibitor. Inhibitor of A.flavus elastase with a Ki of 40 nM. Inhibitor of A.fumigatus elastase and human leukocyte elastase. Inhibits the fibrinogenase and collagenase activities of A.flavus elastase. Does not inhibit porcine pancreatic elastase, trypsin, chymotrypsin, thrombin or A.acutus AC1-proteinase. This is Elastase inhibitor AFLEI from Aspergillus flavus.